The sequence spans 444 residues: DNA primase DnaG (444 aa).

One can recognise a Toprim domain in the interval 173-250 (DAILIVEGRS…YVTRAPRGLE (78 aa)). Mg(2+) contacts are provided by glutamate 179, aspartate 221, and aspartate 223. The tract at residues 302–354 (VTSSVNKTDKYSQKNESKQFKQQKNENKQVKDNSKEKTQKSTEKHNETEETHL) is disordered. Positions 308–354 (KTDKYSQKNESKQFKQQKNENKQVKDNSKEKTQKSTEKHNETEETHL) are enriched in basic and acidic residues.

Belongs to the archaeal DnaG primase family. Forms a ternary complex with MCM helicase and DNA. Component of the archaeal exosome complex. The cofactor is Mg(2+).

The enzyme catalyses ssDNA + n NTP = ssDNA/pppN(pN)n-1 hybrid + (n-1) diphosphate.. Its function is as follows. RNA polymerase that catalyzes the synthesis of short RNA molecules used as primers for DNA polymerase during DNA replication. Also part of the exosome, which is a complex involved in RNA degradation. Acts as a poly(A)-binding protein that enhances the interaction between heteromeric, adenine-rich transcripts and the exosome. The polypeptide is DNA primase DnaG (Methanosphaera stadtmanae (strain ATCC 43021 / DSM 3091 / JCM 11832 / MCB-3)).